The chain runs to 199 residues: NADH-quinone oxidoreductase subunit C (199 aa).

It belongs to the complex I 30 kDa subunit family. As to quaternary structure, NDH-1 is composed of 14 different subunits. Subunits NuoB, C, D, E, F, and G constitute the peripheral sector of the complex.

The protein resides in the cell inner membrane. It catalyses the reaction a quinone + NADH + 5 H(+)(in) = a quinol + NAD(+) + 4 H(+)(out). NDH-1 shuttles electrons from NADH, via FMN and iron-sulfur (Fe-S) centers, to quinones in the respiratory chain. The immediate electron acceptor for the enzyme in this species is believed to be ubiquinone. Couples the redox reaction to proton translocation (for every two electrons transferred, four hydrogen ions are translocated across the cytoplasmic membrane), and thus conserves the redox energy in a proton gradient. In Paramagnetospirillum magneticum (strain ATCC 700264 / AMB-1) (Magnetospirillum magneticum), this protein is NADH-quinone oxidoreductase subunit C.